A 417-amino-acid chain; its full sequence is 4-hydroxy-3-methylbut-2-en-1-yl diphosphate synthase (flavodoxin) (417 aa).

Cys-303, Cys-306, Cys-349, and Glu-356 together coordinate [4Fe-4S] cluster.

It belongs to the IspG family. Requires [4Fe-4S] cluster as cofactor.

The enzyme catalyses (2E)-4-hydroxy-3-methylbut-2-enyl diphosphate + oxidized [flavodoxin] + H2O + 2 H(+) = 2-C-methyl-D-erythritol 2,4-cyclic diphosphate + reduced [flavodoxin]. Its pathway is isoprenoid biosynthesis; isopentenyl diphosphate biosynthesis via DXP pathway; isopentenyl diphosphate from 1-deoxy-D-xylulose 5-phosphate: step 5/6. Converts 2C-methyl-D-erythritol 2,4-cyclodiphosphate (ME-2,4cPP) into 1-hydroxy-2-methyl-2-(E)-butenyl 4-diphosphate. The sequence is that of 4-hydroxy-3-methylbut-2-en-1-yl diphosphate synthase (flavodoxin) from Mesorhizobium japonicum (strain LMG 29417 / CECT 9101 / MAFF 303099) (Mesorhizobium loti (strain MAFF 303099)).